Consider the following 470-residue polypeptide: Calcitonin gene-related peptide type 1 receptor (470 aa).

The first 23 residues, 1–23 (MTASCWTICLFLLGSVTEFIVLA), serve as a signal peptide directing secretion. At 24-147 (SPEVNESQQQ…HTTEGRRTAM (124 aa)) the chain is on the extracellular side. 4 N-linked (GlcNAc...) asparagine glycosylation sites follow: Asn28, Asn74, Asn126, and Asn131. 3 cysteine pairs are disulfide-bonded: Cys56-Cys82, Cys73-Cys113, and Cys96-Cys135. The helical transmembrane segment at 148–172 (NLFYLALIGHGLSLTSLFISLGIFF) threads the bilayer. Over 173–183 (HFKSLSCQRIT) the chain is Cytoplasmic. The helical transmembrane segment at 184–206 (LHKNLFFSFVLNSIITIIWLTAV) threads the bilayer. The Extracellular portion of the chain corresponds to 207–217 (ANNQELVQQNP). The helical transmembrane segment at 218–246 (ISCKISQFIHLYIFGCNYFWMLCEGIYLH) threads the bilayer. The Cytoplasmic portion of the chain corresponds to 247–260 (TLIVVAVFAEKQHL). A helical transmembrane segment spans residues 261-281 (MWYYLLGWGFPLIPATIHAVA). Residues 282-297 (RSYYYNDNCWISSNTS) lie on the Extracellular side of the membrane. A glycan (N-linked (GlcNAc...) asparagine) is linked at Asn295. A helical membrane pass occupies residues 298–322 (LLYIIHGPICAAMLVNLFFLLNIVR). At 323 to 337 (VLITKLKVTHQAKSS) the chain is on the cytoplasmic side. Residues 338–359 (LYMKAVRATLILVPLLGIQYVL) form a helical membrane-spanning segment. At 360-374 (LPYKPSGRVSAEIYD) the chain is on the extracellular side. A helical transmembrane segment spans residues 375-395 (YIMHILMHYQGLLVATIFCFF). Over 396 to 470 (NGEVQAVLRR…AIIKPENPFA (75 aa)) the chain is Cytoplasmic.

The protein belongs to the G-protein coupled receptor 2 family.

It is found in the cell membrane. May function as G protein-coupled receptor for calcitonin-gene-related peptides and adrenomedullin. Specificity may be modulated by accessory proteins. May activate cAMP-dependent pathway. This is Calcitonin gene-related peptide type 1 receptor (calcrla) from Danio rerio (Zebrafish).